A 148-amino-acid chain; its full sequence is Large ribosomal subunit protein bL9 (148 aa).

The protein belongs to the bacterial ribosomal protein bL9 family.

Binds to the 23S rRNA. The sequence is that of Large ribosomal subunit protein bL9 from Aeromonas salmonicida (strain A449).